Here is a 423-residue protein sequence, read N- to C-terminus: AP-1 complex subunit mu-2 (423 aa).

The region spanning 168–421 (KNEVFIDVIE…ITQSGDYQLR (254 aa)) is the MHD domain.

It belongs to the adaptor complexes medium subunit family. Adaptor protein complex 1 (AP-1) is a heterotetramer composed of two large adaptins (gamma-type subunit AP1G1 and beta-type subunit AP1B1), a medium adaptin (mu-type subunit AP1M1 or AP1M2) and a small adaptin (sigma-type subunit AP1S1 or AP1S2 or AP1S3). Interacts with P2X4. In terms of processing, phosphorylation of membrane-bound AP1M1/AP1M2 increases its affinity for sorting signals.

The protein resides in the golgi apparatus. It is found in the cytoplasmic vesicle. It localises to the clathrin-coated vesicle membrane. Subunit of clathrin-associated adaptor protein complex 1 that plays a role in protein sorting in the trans-Golgi network (TGN) and endosomes. The AP complexes mediate the recruitment of clathrin to membranes and the recognition of sorting signals within the cytosolic tails of transmembrane cargo molecules. This Mus musculus (Mouse) protein is AP-1 complex subunit mu-2 (Ap1m2).